The primary structure comprises 526 residues: Rho guanine nucleotide exchange factor 3 (526 aa).

The disordered stretch occupies residues 20 to 40 (ELPPASGPAKDAEEPSNKRVK). Serine 47 and serine 70 each carry phosphoserine. The region spanning 122 to 304 (KRQEAIFELS…QGIVAEINTK (183 aa)) is the DH domain. The PH domain maps to 291–449 (INIIQGIVAE…WLNCIRQAKE (159 aa)). The interval 464-526 (EGSFLNPTTG…GNSRHGESNV (63 aa)) is disordered. A compositionally biased stretch (polar residues) spans 466 to 475 (SFLNPTTGSR).

In terms of assembly, interacts with RHOA and RHOB.

The protein resides in the cytoplasm. In terms of biological role, acts as a guanine nucleotide exchange factor (GEF) for RhoA and RhoB GTPases. This is Rho guanine nucleotide exchange factor 3 (ARHGEF3) from Pongo abelii (Sumatran orangutan).